The chain runs to 453 residues: Putative folate transporter 2 (453 aa).

Transmembrane regions (helical) follow at residues 41 to 64 (IVVYLVGLSDGLIHLASLAIYYLF), 76 to 96 (SLILMYPYLPFILKPIIALIT), 108 to 126 (PYLFLFSLFQSLNFLSLAL), 132 to 156 (IQATLVLFFISLCASFCTTVAEALV), 176 to 195 (IASKAVGSLSVAYFSGYFLE), 201 to 220 (YIFMATSIFPLIISISCLFL), 241 to 260 (FINTPVFIGPFLYIFVYMSG), 280 to 300 (SFMGTLRLTYGIASLIGIIVY), 312 to 330 (TLIFTTLVSFPIYISPIIL), 346 to 366 (VLSGGFLIEAITEIQLLPLFI), and 416 to 437 (LSMYILTCGLFLLLSLSLVPLL).

Belongs to the major facilitator superfamily. Folate-biopterin transporter (TC 2.A.71) family.

The protein resides in the plastid. It localises to the apicoplast. Its subcellular location is the membrane. Putative folate transporter. Required for sporogony of malaria parasites and host switching. This is Putative folate transporter 2 from Plasmodium berghei (strain Anka).